A 513-amino-acid chain; its full sequence is ATP synthase subunit alpha (513 aa).

An ATP-binding site is contributed by 169–176; the sequence is GDRQTGKT.

Belongs to the ATPase alpha/beta chains family. F-type ATPases have 2 components, CF(1) - the catalytic core - and CF(0) - the membrane proton channel. CF(1) has five subunits: alpha(3), beta(3), gamma(1), delta(1), epsilon(1). CF(0) has three main subunits: a(1), b(2) and c(9-12). The alpha and beta chains form an alternating ring which encloses part of the gamma chain. CF(1) is attached to CF(0) by a central stalk formed by the gamma and epsilon chains, while a peripheral stalk is formed by the delta and b chains.

It localises to the cell inner membrane. It carries out the reaction ATP + H2O + 4 H(+)(in) = ADP + phosphate + 5 H(+)(out). Produces ATP from ADP in the presence of a proton gradient across the membrane. The alpha chain is a regulatory subunit. In Shewanella baltica (strain OS223), this protein is ATP synthase subunit alpha.